Consider the following 100-residue polypeptide: Urease subunit gamma (100 aa).

This sequence belongs to the urease gamma subunit family. Heterotrimer of UreA (gamma), UreB (beta) and UreC (alpha) subunits. Three heterotrimers associate to form the active enzyme.

It is found in the cytoplasm. It carries out the reaction urea + 2 H2O + H(+) = hydrogencarbonate + 2 NH4(+). It participates in nitrogen metabolism; urea degradation; CO(2) and NH(3) from urea (urease route): step 1/1. The sequence is that of Urease subunit gamma from Ralstonia pickettii (strain 12J).